A 1410-amino-acid chain; its full sequence is DNA-directed RNA polymerase subunit beta' (1410 aa).

Zn(2+) contacts are provided by C70, C72, C85, and C88. 3 residues coordinate Mg(2+): D460, D462, and D464. C814, C888, C895, and C898 together coordinate Zn(2+).

The protein belongs to the RNA polymerase beta' chain family. As to quaternary structure, the RNAP catalytic core consists of 2 alpha, 1 beta, 1 beta' and 1 omega subunit. When a sigma factor is associated with the core the holoenzyme is formed, which can initiate transcription. It depends on Mg(2+) as a cofactor. Zn(2+) serves as cofactor.

It carries out the reaction RNA(n) + a ribonucleoside 5'-triphosphate = RNA(n+1) + diphosphate. In terms of biological role, DNA-dependent RNA polymerase catalyzes the transcription of DNA into RNA using the four ribonucleoside triphosphates as substrates. In Saccharophagus degradans (strain 2-40 / ATCC 43961 / DSM 17024), this protein is DNA-directed RNA polymerase subunit beta'.